We begin with the raw amino-acid sequence, 82 residues long: Small ribosomal subunit protein uS17 (82 aa).

The protein belongs to the universal ribosomal protein uS17 family. In terms of assembly, part of the 30S ribosomal subunit.

Functionally, one of the primary rRNA binding proteins, it binds specifically to the 5'-end of 16S ribosomal RNA. This is Small ribosomal subunit protein uS17 from Rhodopseudomonas palustris (strain HaA2).